A 254-amino-acid polypeptide reads, in one-letter code: Zinc import ATP-binding protein ZnuC (254 aa).

Residues 5-219 enclose the ABC transporter domain; that stretch reads VELKEVCLSF…PEFARLFGRP (215 aa). 37–44 contributes to the ATP binding site; sequence GPNGAGKS. Residues 233–242 are compositionally biased toward basic and acidic residues; it reads CDGEHHHHEP. A disordered region spans residues 233–254; that stretch reads CDGEHHHHEPQVPVIRLPSRNQ.

Belongs to the ABC transporter superfamily. Zinc importer (TC 3.A.1.15.5) family. In terms of assembly, the complex is composed of two ATP-binding proteins (ZnuC), two transmembrane proteins (ZnuB) and a solute-binding protein (ZnuA).

The protein resides in the cell inner membrane. It carries out the reaction Zn(2+)(out) + ATP(in) + H2O(in) = Zn(2+)(in) + ADP(in) + phosphate(in) + H(+)(in). Its function is as follows. Part of the ABC transporter complex ZnuABC involved in zinc import. Responsible for energy coupling to the transport system. The protein is Zinc import ATP-binding protein ZnuC of Aeromonas hydrophila subsp. hydrophila (strain ATCC 7966 / DSM 30187 / BCRC 13018 / CCUG 14551 / JCM 1027 / KCTC 2358 / NCIMB 9240 / NCTC 8049).